A 41-amino-acid polypeptide reads, in one-letter code: Large ribosomal subunit protein bL36 (41 aa).

The protein belongs to the bacterial ribosomal protein bL36 family.

In Paracoccus denitrificans (strain Pd 1222), this protein is Large ribosomal subunit protein bL36.